Here is a 383-residue protein sequence, read N- to C-terminus: Peroxisomal membrane protein PEX15 (383 aa).

Topologically, residues 1–331 are cytoplasmic; sequence MAASEIMNNL…AVLKHHFTRS (331 aa). Residues 332 to 349 traverse the membrane as a helical segment; the sequence is VLNKNGLLLTGLLLLLCL. The Lumenal segment spans residues 350–383; that stretch reads KKYKSLMAIFKHVPAAFHTVYPQIVGLLKLLASI.

Interacts with PEX6. Interacts with PEX19; targets PEX15 to the peroxisome. Post-translationally, phosphorylated.

It is found in the peroxisome membrane. The protein localises to the endoplasmic reticulum membrane. Peroxisomal docking factor that anchors PEX1 and PEX6 to peroxisome membranes. PEX26 is therefore required for the formation of the PEX1-PEX6 AAA ATPase complex, a complex that mediates the extraction of the PEX5 receptor from peroxisomal membrane. The chain is Peroxisomal membrane protein PEX15 (PEX15) from Saccharomyces cerevisiae (strain ATCC 204508 / S288c) (Baker's yeast).